The primary structure comprises 267 residues: L-aspartate dehydrogenase (267 aa).

The NAD(+) site is built by Ala-124 and Asn-190. Residue His-218 is part of the active site.

It belongs to the L-aspartate dehydrogenase family.

It catalyses the reaction L-aspartate + NADP(+) + H2O = oxaloacetate + NH4(+) + NADPH + H(+). The enzyme catalyses L-aspartate + NAD(+) + H2O = oxaloacetate + NH4(+) + NADH + H(+). It functions in the pathway cofactor biosynthesis; NAD(+) biosynthesis; iminoaspartate from L-aspartate (dehydrogenase route): step 1/1. In terms of biological role, specifically catalyzes the NAD or NADP-dependent dehydrogenation of L-aspartate to iminoaspartate. This chain is L-aspartate dehydrogenase, found in Methanococcus maripaludis (strain C6 / ATCC BAA-1332).